The sequence spans 317 residues: Secreted mono- and diacylglycerol lipase 3 (317 aa).

The N-terminal stretch at methionine 1–alanine 29 is a signal peptide. Cysteines 61 and 310 form a disulfide. N-linked (GlcNAc...) asparagine glycosylation occurs at asparagine 108. Serine 175 functions as the Nucleophile in the catalytic mechanism. Asparagine 194 carries an N-linked (GlcNAc...) asparagine glycan. Residue aspartate 234 is part of the active site. Asparagine 258 carries an N-linked (GlcNAc...) asparagine glycan. Histidine 294 is an active-site residue.

This sequence belongs to the AB hydrolase superfamily. Lipase family. Class 3 subfamily.

It localises to the secreted. It carries out the reaction a monoacylglycerol + H2O = glycerol + a fatty acid + H(+). The catalysed reaction is a diacylglycerol + H2O = a monoacylglycerol + a fatty acid + H(+). In terms of biological role, secreted mono- and diacylglycerol lipase involved in plant virulence. Has a substrate preference for p-nitrophenyl esters with a carbon chain length of C10 (p-nitrophenyl caprate). The sequence is that of Secreted mono- and diacylglycerol lipase 3 from Gibberella zeae (strain ATCC MYA-4620 / CBS 123657 / FGSC 9075 / NRRL 31084 / PH-1) (Wheat head blight fungus).